The sequence spans 464 residues: UDP-N-acetylmuramate--L-alanine ligase (464 aa).

112–118 contributes to the ATP binding site; it reads GTHGKTT.

It belongs to the MurCDEF family.

The protein localises to the cytoplasm. The catalysed reaction is UDP-N-acetyl-alpha-D-muramate + L-alanine + ATP = UDP-N-acetyl-alpha-D-muramoyl-L-alanine + ADP + phosphate + H(+). It functions in the pathway cell wall biogenesis; peptidoglycan biosynthesis. Its function is as follows. Cell wall formation. The chain is UDP-N-acetylmuramate--L-alanine ligase from Chromobacterium violaceum (strain ATCC 12472 / DSM 30191 / JCM 1249 / CCUG 213 / NBRC 12614 / NCIMB 9131 / NCTC 9757 / MK).